A 394-amino-acid chain; its full sequence is Elongation factor Tu (394 aa).

The tr-type G domain maps to 10–204; sequence KPHINIGTIG…AVDDNIPTPE (195 aa). Positions 19 to 26 are G1; the sequence is GHVDHGKT. Position 19 to 26 (19 to 26) interacts with GTP; the sequence is GHVDHGKT. Thr-26 is a binding site for Mg(2+). A G2 region spans residues 60–64; it reads GITIN. Positions 81–84 are G3; sequence DCPG. GTP-binding positions include 81-85 and 136-139; these read DCPGH and NKID. A G4 region spans residues 136–139; it reads NKID. Positions 174 to 176 are G5; the sequence is SAL.

Belongs to the TRAFAC class translation factor GTPase superfamily. Classic translation factor GTPase family. EF-Tu/EF-1A subfamily. As to quaternary structure, monomer.

The protein resides in the cytoplasm. It catalyses the reaction GTP + H2O = GDP + phosphate + H(+). GTP hydrolase that promotes the GTP-dependent binding of aminoacyl-tRNA to the A-site of ribosomes during protein biosynthesis. The sequence is that of Elongation factor Tu from Chlamydia felis (strain Fe/C-56) (Chlamydophila felis).